Reading from the N-terminus, the 376-residue chain is Putative transcription factor egl-18 (376 aa).

4 disordered regions span residues 1-33 (MSIS…CSGC), 65-122 (NNEL…LPDF), 148-197 (MVQQ…SDIP), and 240-264 (ATPS…PNAA). The span at 9-27 (TRPESAEQQHHEVLQRPSD) shows a compositional bias: basic and acidic residues. Low complexity-rich tracts occupy residues 68-89 (LKSS…RSSP) and 165-175 (QQSVSPPQSKS). Over residues 176–195 (VKIEDPMDQDVKQEESERSD) the composition is skewed to basic and acidic residues. The span at 241-250 (TPSSQSQDSS) shows a compositional bias: polar residues. The GATA-type zinc finger occupies 266-290 (CSNCRTDKTTAWRRDAEGKLVCNPC).

In terms of tissue distribution, expressed in differentiated seam cells. Expressed in the head and trunk.

It is found in the nucleus. Functionally, probable transcription factor. Involved in embryonic development and in vulval development in larvae, acting redundantly, at least in part, with elt-6. Perhaps acting together with elt-6, may form a positive feedback loop to initiate and maintain lin-39 gene expression to ensure proper vulval precursor cell (VPC) fate specification. Together with elt-6, acts as a downstream target of the Wnt/beta-catenin asymmetry pathway, required to adopt or maintain the seam cell fate. Required in seam cells, acting redundantly with elt-6, to promote production of alae, expression of several seam-specific genes and maintenance of seam cells in an unfused state. Plays a role in longevity. May form a transcriptional circuit with GATA factors elt-3 and elt-6. The sequence is that of Putative transcription factor egl-18 from Caenorhabditis elegans.